We begin with the raw amino-acid sequence, 245 residues long: Triosephosphate isomerase (245 aa).

4 to 6 contacts substrate; it reads NWK. His91 serves as the catalytic Electrophile. Glu161 (proton acceptor) is an active-site residue. Substrate is bound by residues Gly167, Ser207, and 228–229; that span reads GG.

This sequence belongs to the triosephosphate isomerase family. Homodimer.

The protein localises to the cytoplasm. The catalysed reaction is D-glyceraldehyde 3-phosphate = dihydroxyacetone phosphate. It participates in carbohydrate biosynthesis; gluconeogenesis. The protein operates within carbohydrate degradation; glycolysis; D-glyceraldehyde 3-phosphate from glycerone phosphate: step 1/1. Involved in the gluconeogenesis. Catalyzes stereospecifically the conversion of dihydroxyacetone phosphate (DHAP) to D-glyceraldehyde-3-phosphate (G3P). The sequence is that of Triosephosphate isomerase from Chlorobaculum tepidum (strain ATCC 49652 / DSM 12025 / NBRC 103806 / TLS) (Chlorobium tepidum).